We begin with the raw amino-acid sequence, 237 residues long: Ribosomal RNA small subunit methyltransferase G (237 aa).

S-adenosyl-L-methionine is bound by residues glycine 78, phenylalanine 83, 129–130, and arginine 148; that span reads AE. A disordered region spans residues 218 to 237; it reads KKETPNKYPRKAGMPNKRPL.

This sequence belongs to the methyltransferase superfamily. RNA methyltransferase RsmG family.

The protein localises to the cytoplasm. In terms of biological role, specifically methylates the N7 position of a guanine in 16S rRNA. The protein is Ribosomal RNA small subunit methyltransferase G of Streptococcus pneumoniae serotype 19F (strain G54).